We begin with the raw amino-acid sequence, 1232 residues long: MANGVIPPPGGASPLPQVRVPLEEPPLSPDVEEEDDDLGKTLAVSRFGDLISKPPAWDPEKPSRSYSERDFEFHRHTSHHTHHPLSARLPPPHKLRRLPPTSARHTRRKRKKEKTSAPPSEGTPPIQEEGGAGVDEEEEEEEEEEGESEAEPVEPPHSGTPQKAKFSIGSDEDDSPGLPGRAAVTKPLPSVGPHTDKSPQHSSSSPSPRARASRLAGEKSRPWSPSASYDLRERLCPGSALGNPGGPEQQVPTDEAEAQMLGSADLDDMKSHRLEDNPGVRRHLVKKPSRTQGGRGSPSGLAPILRRKKKKKKLDRRPHEVFVELNELMLDRSQEPHWRETARWIKFEEDVEEETERWGKPHVASLSFRSLLELRRTIAHGAALLDLEQTTLPGIAHLVVETMIVSDQIRPEDRASVLRTLLLKHSHPNDDKDSGFFPRNPSSSSMNSVLGNHHPTPSHGPDGAVPTMADDLGEPAPLWPHDPDAKEKPLHMPGGDGHRGKSLKLLEKIPEDAEATVVLVGCVPFLEQPAAAFVRLNEAVLLESVLEVPVPVRFLFVMLGPSHTSTDYHELGRSIATLMSDKLFHEAAYQADDRQDLLSAISEFLDGSIVIPPSEVEGRDLLRSVAAFQRELLRKRREREQTKVEMTTRGGYTAPGKELSLELGGSEATPEDDPLLRTGSVFGGLVRDVRRRYPHYPSDLRDALHSQCVAAVLFIYFAALSPAITFGGLLGEKTEGLMGVSELIVSTAVLGVLFSLLGAQPLLVVGFSGPLLVFEEAFFKFCRAQDLEYLTGRVWVGLWLVVFVLALVAAEGSFLVRYISPFTQEIFAFLISLIFIYETFYKLYKVFTEHPLLPFYPPEGALEGSLDAGLEPNGSALPPTEGPPSPRNQPNTALLSLILMLGTFFIAFFLRKFRNSRFLGGKARRIIGDFGIPISILVMVLVDYSITDTYTQKLTVPTGLSVTSPDKRSWFIPPLGSARPFPPWMMVAAAVPALLVLILIFMETQITALIVSQKARRLLKGSGFHLDLLLIGSLGGLCGLFGLPWLTAATVRSVTHVNALTVMRTAIAPGDKPQIQEVREQRVTGVLIASLVGLSIVMGAVLRRIPLAVLFGIFLYMGVTSLSGIQLSQRLLLILMPAKHHPEQPYVTKVKTWRMHLFTCIQLGCIALLWVVKSTAASLAFPFLLLLTVPLRHCLLPRLFQDRELQALDSEDAEPNFDEDGQDEYNELHMPV.

The segment covering 1 to 11 (MANGVIPPPGG) has biased composition (pro residues). Disordered stretches follow at residues 1 to 316 (MANG…KLDR) and 429 to 498 (NDDK…GDGH). Residues 1-708 (MANGVIPPPG…DLRDALHSQC (708 aa)) are Cytoplasmic-facing. The segment covering 58–75 (DPEKPSRSYSERDFEFHR) has biased composition (basic and acidic residues). Basic residues-rich tracts occupy residues 76–97 (HTSH…KLRR) and 104–113 (RHTRRKRKKE). A compositionally biased stretch (acidic residues) spans 134-152 (VDEEEEEEEEEEGESEAEP). A phosphoserine mark is found at serine 167, serine 170, serine 175, and serine 198. The segment covering 200 to 215 (QHSSSSPSPRARASRL) has biased composition (low complexity). Positions 267 to 279 (DDMKSHRLEDNPG) are enriched in basic and acidic residues. Basic residues predominate over residues 280–289 (VRRHLVKKPS). The residue at position 295 (arginine 295) is an Omega-N-methylarginine. The span at 305-316 (LRRKKKKKKLDR) shows a compositional bias: basic residues. Residues 440-450 (NPSSSSMNSVL) are compositionally biased toward polar residues. The span at 481 to 498 (HDPDAKEKPLHMPGGDGH) shows a compositional bias: basic and acidic residues. Transmembrane regions (helical) follow at residues 709–731 (VAAV…GLLG), 737–774 (LMGV…LLVF), 794–816 (VWVG…SFLV), 826–847 (IFAF…YKVF), and 893–910 (ALLS…AFFL). The membrane (anion exchange) stretch occupies residues 709–1232 (VAAVLFIYFA…DEYNELHMPV (524 aa)). The Cytoplasmic portion of the chain corresponds to 911–925 (RKFRNSRFLGGKARR). The next 5 helical transmembrane spans lie at 926-946 (IIGD…DYSI), 980-1002 (PFPP…LIFM), 1028-1049 (LLLI…LTAA), 1083-1128 (VTGV…IQLS), and 1155-1191 (MHLF…TVPL). Residue cysteine 1165 is the site of S-palmitoyl cysteine attachment.

Belongs to the anion exchanger (TC 2.A.31) family. In terms of tissue distribution, expressed in the heart.

The protein localises to the cell membrane. The enzyme catalyses hydrogencarbonate(in) + chloride(out) = hydrogencarbonate(out) + chloride(in). Sodium-independent anion exchanger which mediates the electroneutral exchange of chloride for bicarbonate ions across the cell membrane. May be involved in the regulation of intracellular pH, and the modulation of cardiac action potential. This is Anion exchange protein 3 (SLC4A3) from Homo sapiens (Human).